Here is a 175-residue protein sequence, read N- to C-terminus: ATP synthase subunit delta (175 aa).

It belongs to the ATPase delta chain family. F-type ATPases have 2 components, F(1) - the catalytic core - and F(0) - the membrane proton channel. F(1) has five subunits: alpha(3), beta(3), gamma(1), delta(1), epsilon(1). F(0) has three main subunits: a(1), b(2) and c(10-14). The alpha and beta chains form an alternating ring which encloses part of the gamma chain. F(1) is attached to F(0) by a central stalk formed by the gamma and epsilon chains, while a peripheral stalk is formed by the delta and b chains.

Its subcellular location is the cell membrane. Functionally, f(1)F(0) ATP synthase produces ATP from ADP in the presence of a proton or sodium gradient. F-type ATPases consist of two structural domains, F(1) containing the extramembraneous catalytic core and F(0) containing the membrane proton channel, linked together by a central stalk and a peripheral stalk. During catalysis, ATP synthesis in the catalytic domain of F(1) is coupled via a rotary mechanism of the central stalk subunits to proton translocation. In terms of biological role, this protein is part of the stalk that links CF(0) to CF(1). It either transmits conformational changes from CF(0) to CF(1) or is implicated in proton conduction. The protein is ATP synthase subunit delta of Stenotrophomonas maltophilia (strain K279a).